Consider the following 766-residue polypeptide: Single-minded homolog 1 (766 aa).

In terms of domain architecture, bHLH spans 1–53 (MKEKSKNAARTRREKENSEFYELAKLLPLPSAITSQLDKASIIRLTTSYLKMR). 2 PAS domains span residues 77–147 (GREL…QPYH) and 218–288 (PPSA…LVKG). A PAC domain is found at 292–335 (TKYYRFLAKHGGWVWVQSYATIVHNSRSSRPHCIVSVNYVLTDT). Residues 336–766 (EYKGLQLSLD…GTSVIITNGS (431 aa)) enclose the Single-minded C-terminal domain. The span at 353 to 365 (AFSYTSSSTPTMT) shows a compositional bias: polar residues. Disordered stretches follow at residues 353–431 (AFSY…SQHD) and 528–563 (WDED…EPSK). Residues 368 to 387 (RKGAKSRLSSSKSKSRTSPY) carry the Nuclear localization signal motif. Over residues 373–385 (SRLSSSKSKSRTS) the composition is skewed to low complexity. The segment covering 394 to 404 (HTERSESDHDS) has biased composition (basic and acidic residues).

Efficient DNA binding requires dimerization with another bHLH protein. Heterodimer; forms a heterodimer with ARNT, ARNT2.

Its subcellular location is the nucleus. Transcriptional factor that may have pleiotropic effects during embryogenesis and in the adult. The polypeptide is Single-minded homolog 1 (SIM1) (Homo sapiens (Human)).